The primary structure comprises 96 residues: Ribonuclease P protein component 1 (96 aa).

It belongs to the eukaryotic/archaeal RNase P protein component 1 family. Consists of a catalytic RNA component and at least 4-5 protein subunits.

It is found in the cytoplasm. The catalysed reaction is Endonucleolytic cleavage of RNA, removing 5'-extranucleotides from tRNA precursor.. In terms of biological role, part of ribonuclease P, a protein complex that generates mature tRNA molecules by cleaving their 5'-ends. This is Ribonuclease P protein component 1 from Methanococcus aeolicus (strain ATCC BAA-1280 / DSM 17508 / OCM 812 / Nankai-3).